We begin with the raw amino-acid sequence, 396 residues long: Phosphoglycerate kinase (396 aa).

Substrate is bound by residues 21-23, arginine 36, 59-62, arginine 118, and arginine 151; these read DIN and HFGR. Residues lysine 201, glutamate 323, and 353 to 356 contribute to the ATP site; that span reads GGDT.

The protein belongs to the phosphoglycerate kinase family. As to quaternary structure, monomer.

It is found in the cytoplasm. It carries out the reaction (2R)-3-phosphoglycerate + ATP = (2R)-3-phospho-glyceroyl phosphate + ADP. The protein operates within carbohydrate degradation; glycolysis; pyruvate from D-glyceraldehyde 3-phosphate: step 2/5. The chain is Phosphoglycerate kinase from Ruegeria sp. (strain TM1040) (Silicibacter sp.).